The chain runs to 221 residues: MVVLVTRSLLPALFFASRAPFAAATTSARFQRGLATMAAEAFTKHEVIPDVLASNPPSKVVSVKFNSGVEANLGNVLTPTQVKDTPEVKWDAEPGALYTLIKTDPDAPSRKEPTYREWHHWLVVNIPGNDIAKGDTLSEYIGAGPPPKTGLHRYVYLIYKQSGRIEDAEHGRLTNTSGDKRGGWKAADFVAKHKLGAPVFGNLFQAEYDDYVPILNKQLGA.

The protein belongs to the phosphatidylethanolamine-binding protein family.

This is Phosphatidylethanolamine-binding protein homolog F40A3.3 from Caenorhabditis elegans.